A 699-amino-acid chain; its full sequence is Lutropin-choriogonadotropic hormone receptor (699 aa).

The N-terminal stretch at 1-26 (MKQRFSALQLLKLLLLLQPPLPRALR) is a signal peptide. One can recognise an LRRNT domain in the interval 27 to 66 (EALCPEPCNCVPDGALRCPGPTAGLTRLSLAYLPVKVIPS). Residues 27–363 (EALCPEPCNC…EDIMGYDFLR (337 aa)) are Extracellular-facing. LRR repeat units lie at residues 96-115 (NLLN…RYIE), 124-145 (RLKY…TKVF), and 149-171 (SNFI…AFQG). N-linked (GlcNAc...) asparagine glycosylation occurs at Asn99. Asn174 and Asn195 each carry an N-linked (GlcNAc...) asparagine glycan. LRR repeat units follow at residues 175–196 (ESVT…AFNG), 198–220 (TLTS…AFRG), and 223–244 (GPKT…GLES). Residues Asn291, Asn299, and Asn313 are each glycosylated (N-linked (GlcNAc...) asparagine). At Tyr331 the chain carries Sulfotyrosine. A helical transmembrane segment spans residues 364–385 (VLIWLINILAIMGNMTVLFVLL). Residues 386 to 395 (TSRYKLTVPR) are Cytoplasmic-facing. Residues 396-416 (FLMCNLSFADFCMGLYLLLIA) traverse the membrane as a helical segment. Residues 417–439 (SVDSQTKGQYYNHAIDWQTGSGC) are Extracellular-facing. An intrachain disulfide couples Cys439 to Cys514. Residues 440–462 (STAGFFTVFASELSVYTLTVITL) traverse the membrane as a helical segment. Residues 463–482 (ERWHTITYAIHLDQKLRLRH) lie on the Cytoplasmic side of the membrane. The chain crosses the membrane as a helical span at residues 483–505 (AILIMLGGWLFSSLIAMLPLVGV). Residues 506-525 (SNYMKVSICFPMDVETTLSQ) lie on the Extracellular side of the membrane. Residues 526–549 (VYILTILILNVVAFFIICACYIKI) traverse the membrane as a helical segment. Over 550-570 (YFAVRNPELMATNKDTKIAKK) the chain is Cytoplasmic. Residues 571-594 (MAILIFTDFTCMAPISFFAISAAF) form a helical membrane-spanning segment. Residues 595–605 (KVPLITVTNSK) lie on the Extracellular side of the membrane. A helical transmembrane segment spans residues 606 to 627 (VLLVLFYPINSCANPFLYAIFT). Residues 628 to 699 (KTFQRDFFLL…LLDKTRYTEC (72 aa)) are Cytoplasmic-facing. Residues Cys643 and Cys644 are each lipidated (S-palmitoyl cysteine).

This sequence belongs to the G-protein coupled receptor 1 family. FSH/LSH/TSH subfamily. Post-translationally, sulfated. In terms of tissue distribution, gonadal and thyroid cells.

The protein localises to the cell membrane. Its function is as follows. Receptor for lutropin-choriogonadotropic hormone. The activity of this receptor is mediated by G proteins which activate adenylate cyclase. The polypeptide is Lutropin-choriogonadotropic hormone receptor (LHCGR) (Homo sapiens (Human)).